Here is a 286-residue protein sequence, read N- to C-terminus: MREDLLRNSVEFLREKTVLDAPDVKKIEFLKSKGLTAEEIQEAFKLAKNPLFPSYPRFENTSNFVSRDWRDWFIMGVISTGFAWSAYSLVKKYIAPMFRAPSQNAYEADKNALDAKFLEAHKILENLDEQTRKLSERTEKQQDELDIALDDLEETLNTLKRTSENRDREIARISQDVYTMSTITLPQSLEQIKKSQEEALQNLSREISSLRCLQTDSKKDDTFATTSNSSIPVLENPLDTSEGFQTKKVGTASLPDWQISMHNEASKNIDFNDIDPAESYVAEDAY.

The short motif at 61–69 is the SH3-binding element; that stretch reads TSNFVSRDW. Positions 122–214 form a coiled coil; sequence KILENLDEQT…REISSLRCLQ (93 aa). Residues 218 to 239 form a disordered region; it reads KKDDTFATTSNSSIPVLENPLD.

Belongs to the peroxin-14 family. In terms of assembly, interacts with PEX13 (via SH3 domain); forming the PEX13-PEX14 docking complex. Interacts with PEX5 (via WxxxF/Y motifs).

It is found in the peroxisome membrane. Component of the PEX13-PEX14 docking complex, a translocon channel that specifically mediates the import of peroxisomal cargo proteins bound to PEX5 receptor. The PEX13-PEX14 docking complex forms a large import pore which can be opened to a diameter of about 9 nm. Mechanistically, PEX5 receptor along with cargo proteins associates with the PEX14 subunit of the PEX13-PEX14 docking complex in the cytosol, leading to the insertion of the receptor into the organelle membrane with the concomitant translocation of the cargo into the peroxisome matrix. This is Peroxisomal membrane protein pex14 (pex14) from Schizosaccharomyces pombe (strain 972 / ATCC 24843) (Fission yeast).